We begin with the raw amino-acid sequence, 237 residues long: Purine nucleoside phosphorylase DeoD-type (237 aa).

His4 serves as a coordination point for a purine D-ribonucleoside. Phosphate is bound by residues Gly20, Arg24, Arg43, and 87–90 (RVGT). Residues 179-181 (EME) and 203-204 (SD) each bind a purine D-ribonucleoside. The Proton donor role is filled by Asp204.

The protein belongs to the PNP/UDP phosphorylase family. As to quaternary structure, homohexamer; trimer of homodimers.

It catalyses the reaction a purine D-ribonucleoside + phosphate = a purine nucleobase + alpha-D-ribose 1-phosphate. It carries out the reaction a purine 2'-deoxy-D-ribonucleoside + phosphate = a purine nucleobase + 2-deoxy-alpha-D-ribose 1-phosphate. Catalyzes the reversible phosphorolytic breakdown of the N-glycosidic bond in the beta-(deoxy)ribonucleoside molecules, with the formation of the corresponding free purine bases and pentose-1-phosphate. In Streptococcus uberis (strain ATCC BAA-854 / 0140J), this protein is Purine nucleoside phosphorylase DeoD-type.